The following is a 209-amino-acid chain: Thymidine kinase (209 aa).

ATP is bound by residues 25-32 and 103-106; these read GCMFAGKT and DEVQ. Catalysis depends on E104, which acts as the Proton acceptor. Positions 160, 163, 198, and 201 each coordinate Zn(2+).

Belongs to the thymidine kinase family. Homotetramer.

Its subcellular location is the cytoplasm. It carries out the reaction thymidine + ATP = dTMP + ADP + H(+). This is Thymidine kinase from Mycoplasma capricolum subsp. capricolum (strain California kid / ATCC 27343 / NCTC 10154).